The sequence spans 194 residues: Protein GrpE 1 (194 aa).

The tract at residues 1–22 (MIHNEEEQLEKKIEKNQDPKIN) is disordered.

The protein belongs to the GrpE family. Homodimer.

It is found in the cytoplasm. Its function is as follows. Participates actively in the response to hyperosmotic and heat shock by preventing the aggregation of stress-denatured proteins, in association with DnaK and GrpE. It is the nucleotide exchange factor for DnaK and may function as a thermosensor. Unfolded proteins bind initially to DnaJ; upon interaction with the DnaJ-bound protein, DnaK hydrolyzes its bound ATP, resulting in the formation of a stable complex. GrpE releases ADP from DnaK; ATP binding to DnaK triggers the release of the substrate protein, thus completing the reaction cycle. Several rounds of ATP-dependent interactions between DnaJ, DnaK and GrpE are required for fully efficient folding. In Buchnera aphidicola subsp. Acyrthosiphon pisum (strain APS) (Acyrthosiphon pisum symbiotic bacterium), this protein is Protein GrpE 1.